Reading from the N-terminus, the 181-residue chain is Alkyl hydroperoxide reductase AhpD (181 aa).

The active-site Proton donor is the Cys-131. An intrachain disulfide couples Cys-131 to Cys-134. The Cysteine sulfenic acid (-SOH) intermediate role is filled by Cys-134.

It belongs to the AhpD family.

It carries out the reaction N(6)-[(R)-dihydrolipoyl]-L-lysyl-[lipoyl-carrier protein] + a hydroperoxide = N(6)-[(R)-lipoyl]-L-lysyl-[lipoyl-carrier protein] + an alcohol + H2O. Antioxidant protein with alkyl hydroperoxidase activity. Required for the reduction of the AhpC active site cysteine residues and for the regeneration of the AhpC enzyme activity. The polypeptide is Alkyl hydroperoxide reductase AhpD (Azorhizobium caulinodans (strain ATCC 43989 / DSM 5975 / JCM 20966 / LMG 6465 / NBRC 14845 / NCIMB 13405 / ORS 571)).